We begin with the raw amino-acid sequence, 198 residues long: Type II secretion system protein J (198 aa).

The propeptide at Met-1–Gly-7 is leader sequence. Residue Phe-8 is modified to N-methylphenylalanine. The helical transmembrane segment at Phe-8–Val-28 threads the bilayer.

Belongs to the GSP J family. Type II secretion is composed of four main components: the outer membrane complex, the inner membrane complex, the cytoplasmic secretion ATPase and the periplasm-spanning pseudopilus. Interacts with core component PulG. In terms of processing, cleaved by prepilin peptidase. Post-translationally, methylated by prepilin peptidase at the amino group of the N-terminal phenylalanine once the leader sequence is cleaved by prepilin peptidase.

Its subcellular location is the cell inner membrane. Component of the type II secretion system required for the energy-dependent secretion of extracellular factors such as proteases and toxins from the periplasm. Part of the pseudopilus tip complex that is critical for the recognition and binding of secretion substrates. This is Type II secretion system protein J (pulJ) from Klebsiella pneumoniae.